Reading from the N-terminus, the 605-residue chain is DNA mismatch repair protein MutL (605 aa).

The protein belongs to the DNA mismatch repair MutL/HexB family.

Its function is as follows. This protein is involved in the repair of mismatches in DNA. It is required for dam-dependent methyl-directed DNA mismatch repair. May act as a 'molecular matchmaker', a protein that promotes the formation of a stable complex between two or more DNA-binding proteins in an ATP-dependent manner without itself being part of a final effector complex. This is DNA mismatch repair protein MutL from Methylocella silvestris (strain DSM 15510 / CIP 108128 / LMG 27833 / NCIMB 13906 / BL2).